The primary structure comprises 498 residues: MADNKTENTLSSDATEVRAQKLKLLREQIGDVYPAHFHRSLTNAELATRYEGLDPDVETQDIVTVAGRVYSSRNSGMFMDIHDASGKIQIFSHKDVTGEEARALLPMIDIGDIIGVTGIVRRTKRGELTINAQKIEMLTKSLLPMPEKWHGLSDIELRYRKRHLDILTNEDSKLRFQQRSKIVSGIRRFMENDGFMEVETPMLQSIYGGATAEPFKTHHNTLKLDMYLRIAPELFLKRTLVSGLTDKVFEINRNFRNEGVSTRHNPEFTMMECYWAYADYEDMMDLVERLFETLALSIHGTTEFDFGDKRLSFKGPFKRVPMPDAVKEVTGIDFLAIKTDEEARAAAKAAGFAVEKDWTWGECLAFIFEEKVEATLIQPSHVTHFPKDISPFAKEVPGEPRLVERFETYCNAWELGNAFSELNDPEEQRRRMVEQLEQAHARGEKEKQLDEEFLDAIDQGMPPAGGLGIGVDRLIMLLTNAPSIRDVILFPARRSKAD.

Mg(2+)-binding residues include Glu-407 and Glu-414.

Belongs to the class-II aminoacyl-tRNA synthetase family. In terms of assembly, homodimer. The cofactor is Mg(2+).

It localises to the cytoplasm. The enzyme catalyses tRNA(Lys) + L-lysine + ATP = L-lysyl-tRNA(Lys) + AMP + diphosphate. The protein is Lysine--tRNA ligase of Rhizobium etli (strain ATCC 51251 / DSM 11541 / JCM 21823 / NBRC 15573 / CFN 42).